The chain runs to 158 residues: NAD(P)H-quinone oxidoreductase subunit J, chloroplastic (158 aa).

The protein belongs to the complex I 30 kDa subunit family. In terms of assembly, NDH is composed of at least 16 different subunits, 5 of which are encoded in the nucleus.

It is found in the plastid. The protein resides in the chloroplast thylakoid membrane. It catalyses the reaction a plastoquinone + NADH + (n+1) H(+)(in) = a plastoquinol + NAD(+) + n H(+)(out). It carries out the reaction a plastoquinone + NADPH + (n+1) H(+)(in) = a plastoquinol + NADP(+) + n H(+)(out). NDH shuttles electrons from NAD(P)H:plastoquinone, via FMN and iron-sulfur (Fe-S) centers, to quinones in the photosynthetic chain and possibly in a chloroplast respiratory chain. The immediate electron acceptor for the enzyme in this species is believed to be plastoquinone. Couples the redox reaction to proton translocation, and thus conserves the redox energy in a proton gradient. The sequence is that of NAD(P)H-quinone oxidoreductase subunit J, chloroplastic from Buxus microphylla (Littleleaf boxwood).